A 182-amino-acid chain; its full sequence is UPF0397 protein SPH_0594 (182 aa).

Transmembrane regions (helical) follow at residues 10–30 (VVAV…NIPT), 46–66 (LLSI…GHAI), 73–93 (YGLW…VGLF), 109–129 (ILIF…VLAP), and 148–168 (IVAG…LLLA).

This sequence belongs to the UPF0397 family.

It is found in the cell membrane. The chain is UPF0397 protein SPH_0594 from Streptococcus pneumoniae (strain Hungary19A-6).